A 297-amino-acid chain; its full sequence is 3-mercaptopyruvate sulfurtransferase (297 aa).

A2 carries the N-acetylalanine modification. In terms of domain architecture, Rhodanese 1 spans 25–144 (ASQPLKLLDA…WLSQNLPISS (120 aa)). S35 carries the phosphoserine modification. The residue at position 40 (K40) is an N6-acetyllysine; alternate. An N6-succinyllysine; alternate modification is found at K40. Positions 145 to 160 (GKSPSEPAEFCAQLDP) are hinge. An N6-succinyllysine mark is found at K146 and K164. Residues 174–288 (DARRFQVVDA…WYMRAQPEHV (115 aa)) form the Rhodanese 2 domain. R188 provides a ligand contact to substrate. C248 acts as the Cysteine persulfide intermediate in catalysis.

Monomer (active form). Homodimer; disulfide-linked (inactive form). In terms of processing, the N-terminus is blocked. In terms of tissue distribution, expressed in liver, heart, kidney and brain. Localizes to tubular epithelium in the kidney, pericentral hepatocytes in the liver, cardiac cells in the heart and neuroglial cells in the brain. Also expressed in vascular endothelium of the thoracic aorta. Weak expression in lung and thymus.

Its subcellular location is the cytoplasm. It is found in the mitochondrion. It localises to the synapse. The protein resides in the synaptosome. The catalysed reaction is 2-oxo-3-sulfanylpropanoate + [thioredoxin]-dithiol = [thioredoxin]-disulfide + hydrogen sulfide + pyruvate + H(+). With respect to regulation, by oxidative stress, and thioredoxin. Under oxidative stress conditions, the catalytic cysteine site is converted to a sulfenate which inhibits the MPST enzyme activity. Reduced thioredoxin cleaves an intersubunit disulfide bond to turn on the redox switch and reactivate the enzyme. Inhibited by different oxidants, hydrogen peroxide and tetrathionate. Transfer of a sulfur ion to cyanide or to other thiol compounds. Also has weak rhodanese activity. Detoxifies cyanide and is required for thiosulfate biosynthesis. Acts as an antioxidant. In combination with cysteine aminotransferase (CAT), contributes to the catabolism of cysteine and is an important producer of hydrogen sulfide in the brain, retina and vascular endothelial cells. Hydrogen sulfide H(2)S is an important synaptic modulator, signaling molecule, smooth muscle contractor and neuroprotectant. Its production by the 3MST/CAT pathway is regulated by calcium ions. In Rattus norvegicus (Rat), this protein is 3-mercaptopyruvate sulfurtransferase (Mpst).